The primary structure comprises 174 residues: Gamma-crystallin C (174 aa).

Beta/gamma crystallin 'Greek key' domains are found at residues Gly-2 to Ser-40 and Gly-41 to Pro-83. S-methylcysteine is present on Cys-23. The interval Gln-84 to Ser-87 is connecting peptide. 2 consecutive Beta/gamma crystallin 'Greek key' domains span residues His-88–Glu-128 and Gly-129–Val-171.

This sequence belongs to the beta/gamma-crystallin family. Monomer.

In terms of biological role, crystallins are the dominant structural components of the vertebrate eye lens. The sequence is that of Gamma-crystallin C (CRYGC) from Macaca mulatta (Rhesus macaque).